The chain runs to 76 residues: Esculentin-2MT3 (76 aa).

Positions 1 to 22 (MFTLKKSMLLLFFLGTISLSLC) are cleaved as a signal peptide. The propeptide at 23–37 (EEERNADEDDGEKEV) is removed in mature form. A disulfide bond links cysteine 70 and cysteine 76.

This sequence belongs to the frog skin active peptide (FSAP) family. Esculentin subfamily. Expressed by the skin glands.

It localises to the secreted. Functionally, antimicrobial peptide. In Amolops mantzorum (Sichuan torrent frog), this protein is Esculentin-2MT3.